Here is a 1133-residue protein sequence, read N- to C-terminus: Exportin-4 (1133 aa).

It belongs to the exportin family. As to quaternary structure, interacts with Ran and cargo proteins in a GTP-dependent manner.

It localises to the cytoplasm. The protein localises to the nucleus. Mediates the nuclear export of proteins (cargos). In the nucleus binds cooperatively to its cargo and to the GTPase Ran in its active GTP-bound form. Docking of this trimeric complex to the nuclear pore complex (NPC) is mediated through binding to nucleoporins. Upon transit of a nuclear export complex into the cytoplasm, disassembling of the complex and hydrolysis of Ran-GTP to Ran-GDP cause release of the cargo from the export receptor. Xpo4 then return to the nuclear compartment and mediate another round of transport. The directionality of nuclear export is thought to be conferred by an asymmetric distribution of the GTP- and GDP-bound forms of Ran between the cytoplasm and nucleus. The chain is Exportin-4 (xpo4) from Dictyostelium discoideum (Social amoeba).